A 1373-amino-acid polypeptide reads, in one-letter code: MTNCEKDEEFVCISCVEEVRYSFVSHLSEALRRKGINNVVVGVDSDDLLFKESQAKIEKAGVSVMVLPGNCDPSDVWLDKFAKVLECQRNNKDQAVVPVLYGDSLLRDQWLSELDFKGLSRIHQSRKECSDSILVEEIVRDVYETHFYVGRIGIYSKLLEIENMVNKQPIGIRCVGIWGMPGIGKTTLAKAVFDQMSSAFDASCFIEDYDKSIHEKGLYCLLEEQLLPGNDATIMKLSSLRDRLNSKRVLVVLDDVRNALVGESFLEGFDWLGPGSLIIITSRDKQVFCLCGINQIYEVQGLNEKEARQLFLLSASIKEDMGEQNLQELSVRVINYANGNPLAINVYGRELKGKKKLSEMETAFLKLKRRPPFKIVDAFKSTYDTLSDNEKNIFLDIACFFQGENVNYVIQLLEGCGFFPHVEIDVLVDKCLVTISENRVWLHKLTQDIGREIINGETVQIERRRRLWEPWSIKYLLEYNEHKANGEPKTTFKRAQGSEEIEGLFLDTSNLRFDLQPSAFKNMLNLRLLKIYCSNPEVHPVINFPTGSLHSLPNELRLLHWENYPLKSLPQNFDPRHLVEINMPYSQLQKLWGGTKNLEMLRTIRLCHSHHLVDIDDLLKAENLEVIDLQGCTRLQNFPAAGRLLRLRDVNLSGCIKIKSVLEIPPNIEKLHLQGTGILALPVSTVKPNHRELVNFLTEIPGLSEASKLERLTSLLESNSSCQDLGKLICLELKDCSCLQSLPNMANLDLNVLDLSGCSSLNSIQGFPRFLKQLYLGGTAIREVPQLPQSLEILNAHGSCLRSLPNMANLEFLKVLDLSGCSELETIQGFPRNLKELYFAGTTLREVPQLPLSLEVLNAHGSDSEKLPMHYKFNNFFDLSQQVVNDFFLKTLTYVKHIPRGYTQELINKAPTFSFSAPSHTNQNATFDLQPGSSVMTRLNHSWRNTLVGFGMLVEVAFPEDYCDATDFGISCVCRWSNKEGRSCRIERNFHCWAPGKVVPKVRKDHTFVFSDVNMRPSTGEGNDPDIWAGLVVFEFFPINQQTKCLNDRFTVTRCGVRVINVATGNTSLENISLVLSLDPVEVSGYEVLRVSYDDLQEMDKVLFLYIASLFNDEDVDFVAPLIAGIDLDVSSGLKVLADVSLISVSSNGEIVMHSLQRQMGKEILHGQSMLLSDCESSMTENLSDVPKKEKKHRESKVKKVVSIPAIDEGDLWTWRKYGQKDILGSRFPRGYYRCAYKFTHGCKATKQVQRSETDSNMLAITYLSEHNHPRPTKRKALADSTRSTSSSICSAITTSASSRVFQNKDEPNKPHLPSSSTPPGNAAVLFKMTDMEEFQDNMEVDNDVVDTRTLALFPEFQHQPEEEYPWSTFFDY.

The TIR domain occupies 5 to 146 (EKDEEFVCIS…EIVRDVYETH (142 aa)). An NB-ARC domain is found at 170-421 (IGIRCVGIWG…LLEGCGFFPH (252 aa)). Residue 179 to 186 (GMPGIGKT) coordinates ATP. LRR repeat units lie at residues 498–522 (SEEI…AFKN), 535–553 (NPEV…HSLP), 554–575 (NELR…NFDP), 577–598 (HLVE…TKNL), 621–646 (AENL…RLLR), 665–688 (PPNI…TVKP), 742–766 (LPNM…SIQG), 768–793 (PRFL…SLEI), and 831–854 (PRNL…PLSL). Residues 988-1005 (RNFHCWAPGKVVPKVRKD) carry the Nuclear localization signal motif. Residues 1204 to 1272 (IPAIDEGDLW…YLSEHNHPRP (69 aa)) constitute a DNA-binding region (WRKY). The interval 1300 to 1323 (RVFQNKDEPNKPHLPSSSTPPGNA) is disordered.

In terms of assembly, interacts with PopP2, a R.solanacearum type III effector.

The protein localises to the nucleus. Its function is as follows. Transcription factor. Interacts specifically with the W box (5'-(T)TGAC[CT]-3'), a frequently occurring elicitor-responsive cis-acting element. Also acts as a disease resistance protein involved in resistance to fungal and bacterial pathogens, including R.solanacearum, P.syringae pv. tomato and C.higginsianum. In presence of RPS4, elicites an EDS1-dependent hypersensitive response. This Arabidopsis thaliana (Mouse-ear cress) protein is Disease resistance protein RRS1.